A 1041-amino-acid polypeptide reads, in one-letter code: Importin-9 (1041 aa).

N-acetylalanine is present on Ala-2. Positions 43–119 (AEEQIKVLEV…RELLPNGLRE (77 aa)) constitute an Importin N-terminal domain. Residues 936 to 967 (QATPAEWSQDDSNDMWEDQEEEEEEEEDGLAG) are disordered. The segment covering 943-964 (SQDDSNDMWEDQEEEEEEEEDG) has biased composition (acidic residues).

Belongs to the importin beta family. As to quaternary structure, interacts with histones H2A, H2B, H3 and H4. The binding is coupled to RanGTP cycles. Interacts with AKIRIN2; promoting association with pre-assembled proteasomes. Associates with pre-assembled proteasomes; interaction is indirect and mediated via interaction with AKIRIN2. Interacts with PPP2R1A and PPP2R1B.

The protein localises to the cytoplasm. Its subcellular location is the nucleus. Nuclear transport receptor that mediates nuclear import of proteins, such as histones, proteasome and actin. Serves as receptor for nuclear localization signals (NLS) in cargo substrates. Is thought to mediate docking of the importin/substrate complex to the nuclear pore complex (NPC) through binding to nucleoporin and the complex is subsequently translocated through the pore by an energy requiring, Ran-dependent mechanism. At the nucleoplasmic side of the NPC, Ran binds to the importin, the importin/substrate complex dissociates and importin is re-exported from the nucleus to the cytoplasm where GTP hydrolysis releases Ran. The directionality of nuclear import is thought to be conferred by an asymmetric distribution of the GTP- and GDP-bound forms of Ran between the cytoplasm and nucleus. Mediates the import of pre-assembled proteasomes into the nucleus; AKIRIN2 acts as a molecular bridge between IPO9 and the proteasome complex. Mediates the nuclear import of histones H2A, H2B, H4 and H4. In addition to nuclear import, also acts as a chaperone for histones by preventing inappropriate non-nucleosomal interactions. Mediates the nuclear import of actin. The chain is Importin-9 from Homo sapiens (Human).